Consider the following 764-residue polypeptide: MGKIIRISGPVVVAEDVEDAKMYDVVKVGEMGLIGEIIKIEGNRSTIQVYEDTAGIRPDEKVENTRRPLSVELGPGILKSIYDGIQRPLDVIKITSGDFIARGLNPPALDRQKKWEFVPAVKKGETVFPGQILGTVQETSLITHRIMVPEGISGKVTMIADGEHRVEDVIATVSGNGKSYDIQMMTTWPVRKARRVQRKLPPEIPLVTGQRVIDALFPVAKGGTAAVPGPFGSGKCVSGDTPVLLDAGERRIGDLFMEAIQDQKNAVEIGQNEEIVRLHDPLRIYSMVGSEIVESVSHAIYHGKSNAIVTVRTENGREVRVTPVHKLFVKIGNSVIERPASEVNEGDEIACASVSENGDSQTVTTTLVLTFDRVVSKEMHSGVFDVYDLMVPDYGYNFIGGNGLIVLHNTVIQHQLAKWSDANIVVYIGCGERGNEMTEILTTFPELKDPNTGQPLMDRTVLIANTSNMPVAAREASIYTGITIAEYYRDMGYDVALMADSTSRWAEALREISGRLEEMPGEEGYPAYLGRRVSEFYERSGRARLVSPDERYGSITVIGAVSPPGGDISEPVSQNTLRVTRVFWALDAALANRRHFPSINWLNSYSLYTEDLRSWYDKNVSSEWSALRERAMEILQRESELQEVAQLVGYDAMPEKEKSILDVARIIREDFLQQSAFDEIDAYCSLKKQYLMLKAIMEIDTYQNKALDSGATMDNLASLAVREKLSRMKIVPEAQVESYYNDLVEEIHKEYGNFIGEKNAEASL.

The protein belongs to the ATPase alpha/beta chains family. Has multiple subunits with at least A(3), B(3), C, D, E, F, H, I and proteolipid K(x). This protein undergoes a protein self splicing that involves a post-translational excision of the VDE intervening region (intein) followed by peptide ligation.

It localises to the cell membrane. The catalysed reaction is ATP + H2O + 4 H(+)(in) = ADP + phosphate + 5 H(+)(out). Component of the A-type ATP synthase that produces ATP from ADP in the presence of a proton gradient across the membrane. The A chain is the catalytic subunit. The polypeptide is A-type ATP synthase subunit A (Thermoplasma acidophilum (strain ATCC 25905 / DSM 1728 / JCM 9062 / NBRC 15155 / AMRC-C165)).